Reading from the N-terminus, the 241-residue chain is 1-(5-phosphoribosyl)-5-[(5-phosphoribosylamino)methylideneamino] imidazole-4-carboxamide isomerase (241 aa).

The active-site Proton acceptor is Asp11. The active-site Proton donor is the Asp130.

This sequence belongs to the HisA/HisF family.

It localises to the cytoplasm. It carries out the reaction 1-(5-phospho-beta-D-ribosyl)-5-[(5-phospho-beta-D-ribosylamino)methylideneamino]imidazole-4-carboxamide = 5-[(5-phospho-1-deoxy-D-ribulos-1-ylimino)methylamino]-1-(5-phospho-beta-D-ribosyl)imidazole-4-carboxamide. The protein operates within amino-acid biosynthesis; L-histidine biosynthesis; L-histidine from 5-phospho-alpha-D-ribose 1-diphosphate: step 4/9. The polypeptide is 1-(5-phosphoribosyl)-5-[(5-phosphoribosylamino)methylideneamino] imidazole-4-carboxamide isomerase (Acidothermus cellulolyticus (strain ATCC 43068 / DSM 8971 / 11B)).